We begin with the raw amino-acid sequence, 1052 residues long: Swarming motility protein SwrC (1052 aa).

The protein belongs to the resistance-nodulation-cell division (RND) (TC 2.A.6) family.

Its function is as follows. Required for self-resistance to surfactin, an antimicrobial lipopeptide surfactant produced by B.subtilis. Also required for swarming motility. In Bacillus subtilis (strain 168), this protein is Swarming motility protein SwrC (swrC).